A 174-amino-acid polypeptide reads, in one-letter code: Ribosome maturation factor RimM (174 aa).

Residues 97 to 173 (GNKFYFHEVI…DLPVGLVEMY (77 aa)) form the PRC barrel domain.

This sequence belongs to the RimM family. Binds ribosomal protein uS19.

Its subcellular location is the cytoplasm. Functionally, an accessory protein needed during the final step in the assembly of 30S ribosomal subunit, possibly for assembly of the head region. Essential for efficient processing of 16S rRNA. May be needed both before and after RbfA during the maturation of 16S rRNA. It has affinity for free ribosomal 30S subunits but not for 70S ribosomes. In Flavobacterium johnsoniae (strain ATCC 17061 / DSM 2064 / JCM 8514 / BCRC 14874 / CCUG 350202 / NBRC 14942 / NCIMB 11054 / UW101) (Cytophaga johnsonae), this protein is Ribosome maturation factor RimM.